The chain runs to 282 residues: tRNA pseudouridine synthase A (282 aa).

D51 acts as the Nucleophile in catalysis. Y109 provides a ligand contact to substrate.

It belongs to the tRNA pseudouridine synthase TruA family. In terms of assembly, homodimer.

It catalyses the reaction uridine(38/39/40) in tRNA = pseudouridine(38/39/40) in tRNA. Formation of pseudouridine at positions 38, 39 and 40 in the anticodon stem and loop of transfer RNAs. This chain is tRNA pseudouridine synthase A, found in Delftia acidovorans (strain DSM 14801 / SPH-1).